The primary structure comprises 466 residues: 3-isopropylmalate dehydratase large subunit (466 aa).

C347, C407, and C410 together coordinate [4Fe-4S] cluster.

It belongs to the aconitase/IPM isomerase family. LeuC type 1 subfamily. As to quaternary structure, heterodimer of LeuC and LeuD. Requires [4Fe-4S] cluster as cofactor.

It carries out the reaction (2R,3S)-3-isopropylmalate = (2S)-2-isopropylmalate. Its pathway is amino-acid biosynthesis; L-leucine biosynthesis; L-leucine from 3-methyl-2-oxobutanoate: step 2/4. In terms of biological role, catalyzes the isomerization between 2-isopropylmalate and 3-isopropylmalate, via the formation of 2-isopropylmaleate. This Shewanella woodyi (strain ATCC 51908 / MS32) protein is 3-isopropylmalate dehydratase large subunit.